Here is a 62-residue protein sequence, read N- to C-terminus: MDEKLSRVDPKLLELLVCPLSKGRLSYDREHNELVSEKAQLAYPIRDGIPIMLVSEARRLDE.

Belongs to the UPF0434 family.

The protein is UPF0434 protein RHE_CH03977 of Rhizobium etli (strain ATCC 51251 / DSM 11541 / JCM 21823 / NBRC 15573 / CFN 42).